A 289-amino-acid chain; its full sequence is Serine/threonine-protein phosphatase Pgam5, mitochondrial (289 aa).

The chain crosses the membrane as a helical span at residues 7-23 (FACGTGAGLLTFYLTKL).

Belongs to the phosphoglycerate mutase family. BPG-dependent PGAM subfamily. As to quaternary structure, interacts with Pk92B/ASK1.

It localises to the mitochondrion outer membrane. It catalyses the reaction O-phospho-L-seryl-[protein] + H2O = L-seryl-[protein] + phosphate. It carries out the reaction O-phospho-L-threonyl-[protein] + H2O = L-threonyl-[protein] + phosphate. Functionally, displays phosphatase activity for serine/threonine residues, and dephosphorylates and activates Pk92B kinase. Has apparently no phosphoglycerate mutase activity. This is Serine/threonine-protein phosphatase Pgam5, mitochondrial from Drosophila persimilis (Fruit fly).